The sequence spans 1643 residues: Lysine-specific demethylase 6B (1643 aa).

4 disordered regions span residues 52 to 88 (GQPP…PLHG), 190 to 680 (AKRG…PLED), 704 to 807 (ESIR…LKSL), and 822 to 1096 (GAAV…RSLS). Low complexity-rich tracts occupy residues 63-74 (SHGSSSGHPSKP) and 212-223 (AALSGPSGEEGL). The residue at position 224 (Ser224) is a Phosphoserine. The segment covering 242-266 (PGLPLPPPPLPPPPPPPPPPPPPLP) has biased composition (pro residues). Residues 291–307 (GPERKGSAPPERQEQRH) show a composition bias toward basic and acidic residues. Residues 332–342 (AAPPGPGPRPP) are compositionally biased toward pro residues. Basic and acidic residues predominate over residues 359 to 370 (DLRESRVQRSRM). Low complexity predominate over residues 394 to 412 (PGTTTSSSSSSSSNTGLRG). The segment covering 460–484 (SLPPGPSSPPPPPCPRLLRPPPPPA) has biased composition (pro residues). The span at 550–569 (TTSSSNSNSGSHSSSPAGPV) shows a compositional bias: low complexity. Composition is skewed to pro residues over residues 584 to 600 (LPRP…PPLV) and 641 to 658 (GPGP…PVPP). A compositionally biased stretch (basic and acidic residues) spans 704–714 (ESIRKEEEQQQ). Over residues 740–764 (TAPTTTAPAVAVTTTTTTTTTTTAT) the composition is skewed to low complexity. Positions 772-800 (PPALPPPPPLAKFPPPSQPQPPPPPPPSP) are enriched in pro residues. The span at 843-877 (SGATALPPTSAAPSAQGSPQPSASSSSQFSTSGGP) shows a compositional bias: low complexity. The segment covering 889–904 (VPGPMTPTQPPPPLSL) has biased composition (pro residues). Basic and acidic residues predominate over residues 916–929 (EISRACETLVERVG). The span at 972–989 (CKRRQKEHQKEHRRHRRA) shows a compositional bias: basic residues. Basic and acidic residues predominate over residues 990 to 1003 (CKDSVGRRPREGRA). Residues 1004–1016 (KAKAKVPKEKSRR) show a composition bias toward basic residues. The segment covering 1047–1067 (PTAPAPPSAPAPSAQPTPPSA) has biased composition (pro residues). A Glycyl lysine isopeptide (Lys-Gly) (interchain with G-Cter in SUMO2) cross-link involves residue Lys1109. The disordered stretch occupies residues 1288–1325 (FQESLQEEKESEDEESEEPDSTTGTPPSSAPDPKNHHI). Residues 1296–1307 (KESEDEESEEPD) show a composition bias toward acidic residues. In terms of domain architecture, JmjC spans 1339–1502 (RWKPQLQELL…YQLALERYEW (164 aa)). Fe cation contacts are provided by His1390, Glu1392, and His1470. Zn(2+) contacts are provided by Cys1575, Cys1578, Cys1602, and Cys1605.

The protein belongs to the UTX family. Interacts with TLE1. Component of the MLL4 complex, at least composed of KMT2B/MLL4, ASH2L, RBBP5, WDR5, and KDM6B. Interacts with TBX21, SMARCA4, SMARCC1 and SMARCC2. L-ascorbate serves as cofactor. It depends on Fe(2+) as a cofactor.

It is found in the nucleus. It carries out the reaction N(6),N(6),N(6)-trimethyl-L-lysyl(27)-[histone H3] + 2 2-oxoglutarate + 2 O2 = N(6)-methyl-L-lysyl(27)-[histone H3] + 2 formaldehyde + 2 succinate + 2 CO2. Histone demethylase that specifically demethylates 'Lys-27' of histone H3, thereby playing a central role in histone code. Demethylates trimethylated and dimethylated H3 'Lys-27'. Plays a central role in regulation of posterior development, by regulating HOX gene expression. Involved in inflammatory response by participating in macrophage differentiation in case of inflammation by regulating gene expression and macrophage differentiation. Plays a demethylase-independent role in chromatin remodeling to regulate T-box family member-dependent gene expression by acting as a link between T-box factors and the SMARCA4-containing SWI/SNF remodeling complex. The chain is Lysine-specific demethylase 6B (KDM6B) from Homo sapiens (Human).